We begin with the raw amino-acid sequence, 693 residues long: Phosphoribosylformylglycinamidine synthase subunit PurL (693 aa).

The active site involves His-34. ATP-binding residues include Tyr-37 and Lys-76. Glu-78 provides a ligand contact to Mg(2+). Residues 79–82 (SHNH) and Arg-101 contribute to the substrate site. Residue His-80 is the Proton acceptor of the active site. Asp-102 lines the Mg(2+) pocket. Gln-222 lines the substrate pocket. Mg(2+) is bound at residue Asp-248. Position 292-294 (292-294 (ETQ)) interacts with substrate. ATP-binding residues include Asp-470 and Gly-507. Ser-510 contacts substrate.

This sequence belongs to the FGAMS family. As to quaternary structure, monomer. Part of the FGAM synthase complex composed of 1 PurL, 1 PurQ and 2 PurS subunits.

The protein localises to the cytoplasm. It carries out the reaction N(2)-formyl-N(1)-(5-phospho-beta-D-ribosyl)glycinamide + L-glutamine + ATP + H2O = 2-formamido-N(1)-(5-O-phospho-beta-D-ribosyl)acetamidine + L-glutamate + ADP + phosphate + H(+). It functions in the pathway purine metabolism; IMP biosynthesis via de novo pathway; 5-amino-1-(5-phospho-D-ribosyl)imidazole from N(2)-formyl-N(1)-(5-phospho-D-ribosyl)glycinamide: step 1/2. Functionally, part of the phosphoribosylformylglycinamidine synthase complex involved in the purines biosynthetic pathway. Catalyzes the ATP-dependent conversion of formylglycinamide ribonucleotide (FGAR) and glutamine to yield formylglycinamidine ribonucleotide (FGAM) and glutamate. The FGAM synthase complex is composed of three subunits. PurQ produces an ammonia molecule by converting glutamine to glutamate. PurL transfers the ammonia molecule to FGAR to form FGAM in an ATP-dependent manner. PurS interacts with PurQ and PurL and is thought to assist in the transfer of the ammonia molecule from PurQ to PurL. This chain is Phosphoribosylformylglycinamidine synthase subunit PurL, found in Pyrobaculum neutrophilum (strain DSM 2338 / JCM 9278 / NBRC 100436 / V24Sta) (Thermoproteus neutrophilus).